Here is a 467-residue protein sequence, read N- to C-terminus: MSGWARALLLAAVLVVMACLVPAATASLHAEETLTSQFAEFKQKHGRVYESAAEEAFRLSVFRENLFLARLHAAANPHATFGVTPFSDLTREEFRSRYHNGAAHFAAAQERARVPVKVEVVGAPAAVDWRARGAVTAVKDQGQCGSCWAFSAIGNVECQWFLAGHPLTNLSEQMLVSCDKTDSGCSGGLMNNAFEWIVQENNGAVYTEDSYPYASGEGISPPCTTSGHTVGATITGHVELPQDEAQIAAWLAVNGPVAVAVDASSWMTYTGGVMTSCVSEQLDHGVLLVGYNDSAAVPYWIIKNSWTTQWGEEGYIRIAKGSNQCLVKEEASSAVVGGPGPTPEPTTTTTTSAPGPSPSYFVQMSCTDAACIVGCENVTLPTGQCLLTTSGVSAIVTCGAETLTEEVFLTSTHCSGPSVRSSVPLNKCNRLLRGSVEFFCGSSSSGRLADVDRQRRHQPYHSRHRRL.

An N-terminal signal peptide occupies residues 1–18; sequence MSGWARALLLAAVLVVMA. A propeptide spans 19-122 (activation peptide); the sequence is CLVPAATASL…RVPVKVEVVG (104 aa). 3 cysteine pairs are disulfide-bonded: Cys-144/Cys-185, Cys-178/Cys-223, and Cys-277/Cys-325. Residue Cys-147 is part of the active site. Residue Asn-169 is glycosylated (N-linked (GlcNAc...) asparagine). His-284 is a catalytic residue. Asn-292 is a glycosylation site (N-linked (GlcNAc...) asparagine). Residue Asn-304 is part of the active site. Positions 333-355 are disordered; that stretch reads SAVVGGPGPTPEPTTTTTTSAPG. The segment covering 345–354 has biased composition (low complexity); the sequence is PTTTTTTSAP. N-linked (GlcNAc...) asparagine glycosylation is present at Asn-377.

This sequence belongs to the peptidase C1 family.

It carries out the reaction Broad endopeptidase specificity similar to that of cathepsin L.. Strongly inhibited by E-64 (L-trans-epoxysuccinylleucylamido(4-guanidino)butane), Leupeptin, and N-alpha-p-tosyl-L-lysine chloromethyl ketone. Functionally, hydrolyzes chromogenic peptides at the carboxyl Arg or Lys; requires at least one more amino acid, preferably Arg, Phe, Val or Leu, between the terminal Arg or Lys and the amino-blocking group. The cysteine protease may play an important role in the development and differentiation of the parasites at several stages of their life cycle. In Trypanosoma cruzi, this protein is Cruzipain.